The chain runs to 867 residues: 2-methylcitrate dehydratase (2-methyl-trans-aconitate forming) (867 aa).

The [4Fe-4S] cluster site is built by C410, C476, and C479.

Belongs to the aconitase/IPM isomerase family. [4Fe-4S] cluster serves as cofactor.

It catalyses the reaction (2S,3S)-2-methylcitrate = 2-methyl-trans-aconitate + H2O. The catalysed reaction is citrate = D-threo-isocitrate. It functions in the pathway organic acid metabolism; propanoate degradation. Its activity is regulated as follows. Inhibited by ferricyanide and EDTA. Functionally, involved in the catabolism of short chain fatty acids (SCFA) via the 2-methylcitrate cycle II (propionate degradation route). In vivo under anaerobic conditions, AcnD catalyzes the stereospecific dehydration of (2S,3S)-methylcitrate (2-MC) to yield the trans isomer of 2-methyl-aconitate (2-MCA). AcnD can also accept citrate and cis-aconitate, but with a lower efficiency. 2-methylisocitrate and isocitrate are not substrates. This Shewanella oneidensis (strain ATCC 700550 / JCM 31522 / CIP 106686 / LMG 19005 / NCIMB 14063 / MR-1) protein is 2-methylcitrate dehydratase (2-methyl-trans-aconitate forming) (acnD).